The sequence spans 994 residues: Valine--tRNA ligase (994 aa).

Positions 43–53 (PNVTGTLHMGH) match the 'HIGH' region motif. The segment covering 329–345 (QSGMPSGATSDTTNTPS) has biased composition (polar residues). The tract at residues 329–355 (QSGMPSGATSDTTNTPSDPEASSAANQ) is disordered. Residues 585 to 589 (KMSKS) carry the 'KMSKS' region motif. Residue Lys-588 coordinates ATP. Residues 692-714 (AHSPAQHQAGQDGQDAPRTPQPR) form a disordered region. Positions 696–707 (AQHQAGQDGQDA) are enriched in low complexity. Residues 928–994 (LIDVDAERVR…NGLRERRATL (67 aa)) are a coiled coil.

This sequence belongs to the class-I aminoacyl-tRNA synthetase family. ValS type 1 subfamily. Monomer.

It localises to the cytoplasm. The catalysed reaction is tRNA(Val) + L-valine + ATP = L-valyl-tRNA(Val) + AMP + diphosphate. Its function is as follows. Catalyzes the attachment of valine to tRNA(Val). As ValRS can inadvertently accommodate and process structurally similar amino acids such as threonine, to avoid such errors, it has a 'posttransfer' editing activity that hydrolyzes mischarged Thr-tRNA(Val) in a tRNA-dependent manner. The protein is Valine--tRNA ligase of Xylella fastidiosa (strain 9a5c).